The following is a 344-amino-acid chain: Protein RecA (344 aa).

65–72 (GPESSGKT) contributes to the ATP binding site.

It belongs to the RecA family.

The protein localises to the cytoplasm. Can catalyze the hydrolysis of ATP in the presence of single-stranded DNA, the ATP-dependent uptake of single-stranded DNA by duplex DNA, and the ATP-dependent hybridization of homologous single-stranded DNAs. It interacts with LexA causing its activation and leading to its autocatalytic cleavage. This chain is Protein RecA, found in Campylobacter lari.